The primary structure comprises 223 residues: Ribose-5-phosphate isomerase A (223 aa).

Residues 28–31 (TGTT), 81–84 (DSAD), and 94–97 (KGGG) contribute to the substrate site. The active-site Proton acceptor is the glutamate 103. Lysine 121 serves as a coordination point for substrate.

The protein belongs to the ribose 5-phosphate isomerase family. As to quaternary structure, homodimer.

The catalysed reaction is aldehydo-D-ribose 5-phosphate = D-ribulose 5-phosphate. The protein operates within carbohydrate degradation; pentose phosphate pathway; D-ribose 5-phosphate from D-ribulose 5-phosphate (non-oxidative stage): step 1/1. Catalyzes the reversible conversion of ribose-5-phosphate to ribulose 5-phosphate. This is Ribose-5-phosphate isomerase A from Buchnera aphidicola subsp. Acyrthosiphon pisum (strain 5A).